A 269-amino-acid chain; its full sequence is Shikimate dehydrogenase (NADP(+)) (269 aa).

Residues 15–17 and Thr-62 each bind shikimate; that span reads SLS. The active-site Proton acceptor is the Lys-66. Asn-86 and Asp-99 together coordinate shikimate. Residues 123–127, 146–151, and Leu-213 contribute to the NADP(+) site; these read GAGGA and NRTTAK. Position 215 (Tyr-215) interacts with shikimate. Residue Gly-236 participates in NADP(+) binding.

Belongs to the shikimate dehydrogenase family. In terms of assembly, homodimer.

It carries out the reaction shikimate + NADP(+) = 3-dehydroshikimate + NADPH + H(+). It participates in metabolic intermediate biosynthesis; chorismate biosynthesis; chorismate from D-erythrose 4-phosphate and phosphoenolpyruvate: step 4/7. Functionally, involved in the biosynthesis of the chorismate, which leads to the biosynthesis of aromatic amino acids. Catalyzes the reversible NADPH linked reduction of 3-dehydroshikimate (DHSA) to yield shikimate (SA). The polypeptide is Shikimate dehydrogenase (NADP(+)) (Methanocella arvoryzae (strain DSM 22066 / NBRC 105507 / MRE50)).